The chain runs to 476 residues: Protein transport protein SEC61 subunit alpha (476 aa).

Topologically, residues 1–33 (MSSLRFLDLVKPFVPFLPEVQQPETKIPFNQKL) are cytoplasmic. The chain crosses the membrane as a helical span at residues 34–54 (MWTGLTLLIFLVMSQMPLYGI). At 55–76 (VSSDTSDPLYWLRMMMASNRGT) the chain is on the lumenal side. The helical transmembrane segment at 77 to 97 (LMELGITPIISSGMVFQLLAG) threads the bilayer. Over 98–119 (THMIDVNLDLKADRELYQTAQK) the chain is Cytoplasmic. Residues 120 to 140 (LFAVILSIGTATVYVFTGLYG) traverse the membrane as a helical segment. Over 141–146 (PPSDLG) the chain is Lumenal. The helical transmembrane segment at 147–167 (AGIVFLLILQLVVAGMIVILL) threads the bilayer. The Cytoplasmic portion of the chain corresponds to 168–246 (DELLQKGYGL…YRQNLPNIMN (79 aa)). The chain crosses the membrane as a helical span at residues 247–267 (LLATLVVFAAVIYLQGFRVEI). At 268–361 (PVKSSRQRGA…KDALLDPIHT (94 aa)) the chain is on the lumenal side. A helical transmembrane segment spans residues 362–382 (AVYIAYMLTACAVFSKTWIEV). Residues 383–415 (SGSSPRDVAKQLKDQGLVMAGHREQSMYKELKR) are Cytoplasmic-facing. The helical transmembrane segment at 416–434 (IIPTAAAFGGACIGALSVA) threads the bilayer. Residues 435 to 440 (SDLMGA) lie on the Lumenal side of the membrane. A helical membrane pass occupies residues 441-458 (LGSGTGTLLAVTIIYGYF). The Cytoplasmic segment spans residues 459–476 (EIAAKEGDLQGMKGMIMG).

It belongs to the SecY/SEC61-alpha family. As to quaternary structure, heterotrimeric complex composed of SEC61-alpha, SEC61-beta and SEC61-gamma.

The protein localises to the endoplasmic reticulum membrane. Functionally, appears to play a crucial role in the insertion of secretory and membrane polypeptides into the ER. It is required for assembly of membrane and secretory proteins and is essential for cell growth. It interacts with other membrane proteins required for protein translocation. Upon binding to SEC62/63 complex, secretory precursor polypeptides may engage SEC61 to begin membrane penetration event. A cycle of assembly and disassembly of SEC62/63 from SEC61 may govern the activity of the translocase. The protein is Protein transport protein SEC61 subunit alpha (sec-61) of Neurospora crassa (strain ATCC 24698 / 74-OR23-1A / CBS 708.71 / DSM 1257 / FGSC 987).